We begin with the raw amino-acid sequence, 352 residues long: MSLFGQATTSTVSNATGDLKKDVEVAQPPEDSISDLAFSPQAEYLAASSWDSKVRIYEVQATGQSIGKALYEHQGPVLSVNWSRDGTKVASGSVDKSAKVFDIQTGQNQQVAAHDDAVRCVRFVEAMGTSPILATGSWDKTLKYWDLRQSTPIATVSLPERVYAMDCVHPLLTVATAERNICVINLSEPTKIFKLAMSPLKFQTRSLACFIKGDGYAIGSVEGRCAIQNIDEKNASQNFSFRCHRNQAGNSADVYSVNSIAFHPQYGTFSTAGSDGTFSFWDKDSHQRLKSYPNVGGTISCSTFNRTGDIFAYAISYDWSKGYTFNNAQLPNKIMLHPVPQDEIKPRPKKGR.

WD repeat units follow at residues 28-58 (PPEDSISDLAFSPQAEYLAASSWDSKVRIYE), 72-102 (EHQGPVLSVNWSRDGTKVASGSVDKSAKVFD), 113-146 (AHDDAVRCVRFVEAMGTSPILATGSWDKTLKYWD), 192-229 (IFKLAMSPLKFQTRSLACFIKGDGYAIGSVEGRCAIQN), and 252-282 (ADVYSVNSIAFHPQYGTFSTAGSDGTFSFWD).

The protein belongs to the WD repeat rae1 family. In terms of assembly, interacts with rpn15/dss1 and uap56.

It localises to the nucleus. Required for mitotic cell growth as well as for spore germination. Functions in cell cycle progression through trafficking of proteins required for mitosis. Has a role in the mRNA export process. In Schizosaccharomyces pombe (strain 972 / ATCC 24843) (Fission yeast), this protein is Poly(A)+ RNA export protein (rae1).